Consider the following 715-residue polypeptide: DNA ligase (715 aa).

NAD(+) contacts are provided by residues D47–D51, S96–L97, and E129. Catalysis depends on K131, which acts as the N6-AMP-lysine intermediate. NAD(+)-binding residues include R152, E189, K306, and K330. C435, C438, C453, and C459 together coordinate Zn(2+). Residues K637 to G715 form the BRCT domain.

The protein belongs to the NAD-dependent DNA ligase family. LigA subfamily. The cofactor is Mg(2+). Requires Mn(2+) as cofactor.

The enzyme catalyses NAD(+) + (deoxyribonucleotide)n-3'-hydroxyl + 5'-phospho-(deoxyribonucleotide)m = (deoxyribonucleotide)n+m + AMP + beta-nicotinamide D-nucleotide.. Functionally, DNA ligase that catalyzes the formation of phosphodiester linkages between 5'-phosphoryl and 3'-hydroxyl groups in double-stranded DNA using NAD as a coenzyme and as the energy source for the reaction. It is essential for DNA replication and repair of damaged DNA. This Rhodopseudomonas palustris (strain BisA53) protein is DNA ligase.